We begin with the raw amino-acid sequence, 249 residues long: Phosphoribosylaminoimidazole-succinocarboxamide synthase (249 aa).

It belongs to the SAICAR synthetase family.

It carries out the reaction 5-amino-1-(5-phospho-D-ribosyl)imidazole-4-carboxylate + L-aspartate + ATP = (2S)-2-[5-amino-1-(5-phospho-beta-D-ribosyl)imidazole-4-carboxamido]succinate + ADP + phosphate + 2 H(+). The protein operates within purine metabolism; IMP biosynthesis via de novo pathway; 5-amino-1-(5-phospho-D-ribosyl)imidazole-4-carboxamide from 5-amino-1-(5-phospho-D-ribosyl)imidazole-4-carboxylate: step 1/2. In Chloroflexus aurantiacus (strain ATCC 29366 / DSM 635 / J-10-fl), this protein is Phosphoribosylaminoimidazole-succinocarboxamide synthase.